The sequence spans 292 residues: Nucleotide-binding protein AZOSEA20610 (292 aa).

ATP is bound at residue 8–15 (GLSGSGKS). 57–60 (DVRS) serves as a coordination point for GTP.

The protein belongs to the RapZ-like family.

Its function is as follows. Displays ATPase and GTPase activities. This chain is Nucleotide-binding protein AZOSEA20610, found in Aromatoleum aromaticum (strain DSM 19018 / LMG 30748 / EbN1) (Azoarcus sp. (strain EbN1)).